Reading from the N-terminus, the 272-residue chain is MCQVFGVSRSGYYNWVQHEPSDRKQSDERLKLEIKVAHIRTRETYGTRRLQTELAENGIIVGRDRLARLRKELRLRCKQKRKFRATTNSNHNLPVAPNLLNQTFAPTAPNQVWVADLTYVATQEGWLYLAGIKDVYTCEIVRYAMGERMTKELTGKALFMALRSQRPPAGLIHHSDRGSQYCAYDYRVIQEQSGLKTSMSRKGNCYDNAPMESFWGTLKNESLSHYRFNNRDEAISVIREYIEIFYNRQRRHSRLGNISPAAFREKYHQMAA.

The 164-residue stretch at 105-268 (APTAPNQVWV…SPAAFREKYH (164 aa)) folds into the Integrase catalytic domain.

The chain is Insertion element IS600 uncharacterized 31 kDa protein from Shigella sonnei.